The sequence spans 422 residues: Serine hydroxymethyltransferase (422 aa).

Residues Leu-119 and 123–125 (GHL) each bind (6S)-5,6,7,8-tetrahydrofolate. Lys-228 is modified (N6-(pyridoxal phosphate)lysine). (6S)-5,6,7,8-tetrahydrofolate-binding positions include Glu-244 and 352 to 354 (SPF).

It belongs to the SHMT family. Homodimer. Requires pyridoxal 5'-phosphate as cofactor.

It localises to the cytoplasm. The enzyme catalyses (6R)-5,10-methylene-5,6,7,8-tetrahydrofolate + glycine + H2O = (6S)-5,6,7,8-tetrahydrofolate + L-serine. It participates in one-carbon metabolism; tetrahydrofolate interconversion. It functions in the pathway amino-acid biosynthesis; glycine biosynthesis; glycine from L-serine: step 1/1. Catalyzes the reversible interconversion of serine and glycine with tetrahydrofolate (THF) serving as the one-carbon carrier. This reaction serves as the major source of one-carbon groups required for the biosynthesis of purines, thymidylate, methionine, and other important biomolecules. Also exhibits THF-independent aldolase activity toward beta-hydroxyamino acids, producing glycine and aldehydes, via a retro-aldol mechanism. This Magnetococcus marinus (strain ATCC BAA-1437 / JCM 17883 / MC-1) protein is Serine hydroxymethyltransferase.